A 981-amino-acid chain; its full sequence is MKYNTGAGTVPEQLNVHLVPHSHDDVGWLKTVDQYYVGSENYIQEACVENVLDSVVMSLQRDPNRKFVFGEMAFFHRWWLEQTPETKELXXKLVKAGQLEFVNGGWCMHDEATTHYIDMIDHTTLGHRFLQEQFNKIPRAGWQIDPFGHSAVQGYLLGAELGFDSVHFARIDYQDREKRKGEKSLEVVWRGSKTFGSSAQIFANAFPGHYGPPNGFNFEVRNNFVPLQDDPRLFDTNVEERVQNFLDAALTQAKLTRTNHLMWTMGDDFQYQYAESWFKQMDKLLHHVNKDGRVNALYSTPSLYTEAKNAANQTWPLKIDDYFPYADGRNAYWTGFYTSRXXXXXXXXMLSGYYLATRHSGFFAGKKSTKYHAFDLADALGIAQHHDAVSGTAKQHTTNDYAKRLALGASKAEAVVSSSLACLTSKQSADQCSAPASAFSQCHLFNISYCPPTESSLPDDKSLVVVVYNPLGWSRNEIVRIPVNDANLVVKDSSGNKLEVQYVEMDDVTANLRSFYVKXXXXXXXXXXXXYWSLFKASVPPLGWSTYFISEATGKGTRNALTLSQKGETLNIGPGDLKMSFSSLTGQLKRMYNSKTGVDLPIQQNYLWYESSEGDFSDYQASGAYLFRPNGQPPPHTVSRSSVTRVTRGPLVDEVHQKFNSWISQVTRLYKDKDHAEIEFTIGPIPTDDGVGKEVITRMTSTMATNKEFYTDSNGRDFLKRVRDYREDWPLEVTQPVAGNYYPLNLGLYTKDEKSEFSVLVDRATGGASIKDGEVELMLHRRTLRDDGRGVGEPLDEQVCMNKEYTCEGLTVRGNYYLSIHKPAGGSRWRRTTGQEIYSPMLLAFTQENMENWKSSHSTKAYAMDPNYSLPPSVALITLEELDDGLVLLRLAHLYEPSEDAEYSTLTKVELKKLFATQKLEELREVSLSANQEKSEMKKMKWSVEGDNEQEPQAVRGGPVSNADFVVELGPMEIRTFLLQF.

Residues histidine 23, aspartate 25, and aspartate 145 each coordinate Zn(2+). Residue aspartate 145 is the Nucleophile of the active site. Asparagine 312 carries an N-linked (GlcNAc...) asparagine glycan. Histidine 386 contributes to the Zn(2+) binding site. 3 disulfides stabilise this stretch: cysteine 422–cysteine 432, cysteine 442–cysteine 450, and cysteine 800–cysteine 807. Asparagine 446 carries an N-linked (GlcNAc...) asparagine glycan. The segment at 938–957 is disordered; sequence KKMKWSVEGDNEQEPQAVRG.

This sequence belongs to the glycosyl hydrolase 38 family. Dimer of dimers of heavy and light subunits. It depends on Zn(2+) as a cofactor. In terms of processing, produced as a precursor which is then proteolytically cleaved into a 66kD heavy subunit and a 44kD light subunit. Cleavage probably occurs in protein bodies/protein storage vacuoles.

It localises to the protein storage vacuole. It carries out the reaction Hydrolysis of terminal, non-reducing alpha-D-mannose residues in alpha-D-mannosides.. Inhibited by 2,3,4,6-tetra-O-acetyl-5-fluoro-beta-L-gulopyranosyl fluoride which acts as a slow substrate, doubling as a competitive inhibitor as it forms a high steady state concentration of glycosyl-enzyme intermediate that blocks the active site. Inhibited by 2,3,4,6-tetra-O-acetyl-5-fluoro-alpha-D-mannopyranosyl fluoride which also acts as a slow substrate but no intermediates accumulate. Inhibited by EDTA. Inhibited by metal ion Cu(2+). Inhibited by metal ions Fe(2+), Cd(2+) and Co(2+). Inhibited by metal ions Ag(+) and Hg(2+). Competitively inhibited by mannono-1-4-lactone and mannono-1-5-lactone. Inhibited by swainsonine but not by 1-desoxymannojirimycin. Inhibited by pyrrolidine-3,4-diol derivatives. In terms of biological role, liberates mannose from p-nitrophenyl-alpha-D-mannoside. Liberates mannose from further alpha-D-mannosides including methyl-, benzyl-alpha-D-mannoside, 1-6-linked di-, tri- and tetrasaccharides of alpha-D-mannose and mannosyl-rhamnose. Liberates mannose from various glycoproteins like ovalbumin and ovomucoid. Does not hydrolyze beta-D-mannosides. Has glycosyltransferase activity, forming disaccharides from mannose and lyxose but not from glucose, galactose, ribose, xylose or arabinose. The chain is Alpha-mannosidase from Canavalia ensiformis (Jack bean).